The sequence spans 359 residues: Insulin gene enhancer protein isl-2a (359 aa).

2 consecutive LIM zinc-binding domains span residues 27–80 and 30–143; these read CVGC…CKRD and CGSQ…RADH. The interval 171–190 is disordered; sequence EPVPVRQPPHRNHVHKQSEK. Residues 191–250 constitute a DNA-binding region (homeobox); sequence TTRVRTVLNEKQLHTLRTCYNANPRPDALMKEQLVEMTGLSPRVIRVWFQNKRCKDKKKS. Positions 326–336 are enriched in low complexity; the sequence is ESGSLGNSSGS. Residues 326 to 359 are disordered; the sequence is ESGSLGNSSGSDVTSLSSQLPDTPNSMVPSPVET. A compositionally biased stretch (polar residues) spans 337 to 359; that stretch reads DVTSLSSQLPDTPNSMVPSPVET.

The protein localises to the nucleus. Binds to one of the cis-acting domain of the insulin gene enhancer. May be involved in subtype specialization of primary motoneurons. In Danio rerio (Zebrafish), this protein is Insulin gene enhancer protein isl-2a (isl2a).